The following is a 175-amino-acid chain: ATP synthase subunit delta (175 aa).

The protein belongs to the ATPase delta chain family. As to quaternary structure, F-type ATPases have 2 components, F(1) - the catalytic core - and F(0) - the membrane proton channel. F(1) has five subunits: alpha(3), beta(3), gamma(1), delta(1), epsilon(1). F(0) has three main subunits: a(1), b(2) and c(10-14). The alpha and beta chains form an alternating ring which encloses part of the gamma chain. F(1) is attached to F(0) by a central stalk formed by the gamma and epsilon chains, while a peripheral stalk is formed by the delta and b chains.

Its subcellular location is the cell membrane. Functionally, f(1)F(0) ATP synthase produces ATP from ADP in the presence of a proton or sodium gradient. F-type ATPases consist of two structural domains, F(1) containing the extramembraneous catalytic core and F(0) containing the membrane proton channel, linked together by a central stalk and a peripheral stalk. During catalysis, ATP synthesis in the catalytic domain of F(1) is coupled via a rotary mechanism of the central stalk subunits to proton translocation. In terms of biological role, this protein is part of the stalk that links CF(0) to CF(1). It either transmits conformational changes from CF(0) to CF(1) or is implicated in proton conduction. This is ATP synthase subunit delta from Brevibacillus brevis (strain 47 / JCM 6285 / NBRC 100599).